Here is a 413-residue protein sequence, read N- to C-terminus: Alpha-1-antitrypsin-like protein GS55-LT (413 aa).

An N-terminal signal peptide occupies residues 1–21; the sequence is MPSSISWGLLLLAGLSCLATG. Asn-65, Asn-102, and Asn-123 each carry an N-linked (GlcNAc...) asparagine glycan. The RCL stretch occupies residues 368–387; that stretch reads RHTVKGPMALTLAPEVKFNR.

The protein belongs to the serpin family.

It is found in the secreted. Functionally, inhibitor of serine proteases. In Ictidomys tridecemlineatus (Thirteen-lined ground squirrel), this protein is Alpha-1-antitrypsin-like protein GS55-LT.